The sequence spans 366 residues: Capsular polysaccharide phosphotransferase LcbA (366 aa).

This sequence belongs to the stealth family.

This chain is Capsular polysaccharide phosphotransferase LcbA (lcbA), found in Neisseria meningitidis.